Consider the following 505-residue polypeptide: AAA-ATPase At5g17760 (505 aa).

A helical membrane pass occupies residues 11–27 (TSVFTAYASMAGYMMMI). The tract at residues 136 to 155 (GGGGGVGGRGGGGGRRGGMD) is disordered. Residues 137-151 (GGGGVGGRGGGGGRR) are compositionally biased toward gly residues. Residue 260–267 (GPPGTGKS) participates in ATP binding.

The protein belongs to the AAA ATPase family. BCS1 subfamily. Requires Mg(2+) as cofactor.

The protein localises to the membrane. The enzyme catalyses ATP + H2O = ADP + phosphate + H(+). The protein is AAA-ATPase At5g17760 of Arabidopsis thaliana (Mouse-ear cress).